The chain runs to 91 residues: Cell division protein FtsB (91 aa).

At Met-1–Phe-3 the chain is on the cytoplasmic side. The chain crosses the membrane as a helical span at residues Ile-4 to Ile-21. At Ser-22–Pro-91 the chain is on the periplasmic side. Residues Leu-26–Gly-74 adopt a coiled-coil conformation.

The protein belongs to the FtsB family. In terms of assembly, part of a complex composed of FtsB, FtsL and FtsQ.

The protein localises to the cell inner membrane. In terms of biological role, essential cell division protein. May link together the upstream cell division proteins, which are predominantly cytoplasmic, with the downstream cell division proteins, which are predominantly periplasmic. In Nitrosococcus oceani (strain ATCC 19707 / BCRC 17464 / JCM 30415 / NCIMB 11848 / C-107), this protein is Cell division protein FtsB.